We begin with the raw amino-acid sequence, 310 residues long: tRNA-cytidine(32) 2-sulfurtransferase (310 aa).

The PP-loop motif signature appears at 48–53 (SGGKDS). Residues C123, C126, and C214 each coordinate [4Fe-4S] cluster.

This sequence belongs to the TtcA family. As to quaternary structure, homodimer. It depends on Mg(2+) as a cofactor. Requires [4Fe-4S] cluster as cofactor.

It is found in the cytoplasm. It catalyses the reaction cytidine(32) in tRNA + S-sulfanyl-L-cysteinyl-[cysteine desulfurase] + AH2 + ATP = 2-thiocytidine(32) in tRNA + L-cysteinyl-[cysteine desulfurase] + A + AMP + diphosphate + H(+). It functions in the pathway tRNA modification. In terms of biological role, catalyzes the ATP-dependent 2-thiolation of cytidine in position 32 of tRNA, to form 2-thiocytidine (s(2)C32). The sulfur atoms are provided by the cysteine/cysteine desulfurase (IscS) system. The polypeptide is tRNA-cytidine(32) 2-sulfurtransferase (Vibrio cholerae serotype O1 (strain ATCC 39315 / El Tor Inaba N16961)).